Reading from the N-terminus, the 63-residue chain is Cytochrome c oxidase subunit 7C, mitochondrial (63 aa).

Residues 1–16 (MLGQSIRRFTTSVVRR) constitute a mitochondrion transit peptide. Topologically, residues 17-33 (SHYEEGPGKNIPFSVEN) are mitochondrial matrix. N6-acetyllysine; alternate is present on Lys25. Lys25 is modified (N6-succinyllysine; alternate). The helical transmembrane segment at 34–60 (KWRLLAMMTLFFGSGFAAPFFIVRHQL) threads the bilayer. Topologically, residues 61 to 63 (LKK) are mitochondrial intermembrane.

It belongs to the cytochrome c oxidase VIIc family. As to quaternary structure, component of the cytochrome c oxidase (complex IV, CIV), a multisubunit enzyme composed of 14 subunits. The complex is composed of a catalytic core of 3 subunits MT-CO1, MT-CO2 and MT-CO3, encoded in the mitochondrial DNA, and 11 supernumerary subunits COX4I1 (or COX4I2), COX5A, COX5B, COX6A2 (or COX6A1), COX6B1 (or COX6B2), COX6C, COX7A1 (or COX7A2), COX7B, COX7C, COX8B and NDUFA4, which are encoded in the nuclear genome. The complex exists as a monomer or a dimer and forms supercomplexes (SCs) in the inner mitochondrial membrane with NADH-ubiquinone oxidoreductase (complex I, CI) and ubiquinol-cytochrome c oxidoreductase (cytochrome b-c1 complex, complex III, CIII), resulting in different assemblies (supercomplex SCI(1)III(2)IV(1) and megacomplex MCI(2)III(2)IV(2)). Interacts with RAB5IF. In terms of tissue distribution, liver, heart, muscle and brain, contain the same isoform of COX VIIc, but at different concentrations.

The protein localises to the mitochondrion inner membrane. It functions in the pathway energy metabolism; oxidative phosphorylation. In terms of biological role, component of the cytochrome c oxidase, the last enzyme in the mitochondrial electron transport chain which drives oxidative phosphorylation. The respiratory chain contains 3 multisubunit complexes succinate dehydrogenase (complex II, CII), ubiquinol-cytochrome c oxidoreductase (cytochrome b-c1 complex, complex III, CIII) and cytochrome c oxidase (complex IV, CIV), that cooperate to transfer electrons derived from NADH and succinate to molecular oxygen, creating an electrochemical gradient over the inner membrane that drives transmembrane transport and the ATP synthase. Cytochrome c oxidase is the component of the respiratory chain that catalyzes the reduction of oxygen to water. Electrons originating from reduced cytochrome c in the intermembrane space (IMS) are transferred via the dinuclear copper A center (CU(A)) of subunit 2 and heme A of subunit 1 to the active site in subunit 1, a binuclear center (BNC) formed by heme A3 and copper B (CU(B)). The BNC reduces molecular oxygen to 2 water molecules using 4 electrons from cytochrome c in the IMS and 4 protons from the mitochondrial matrix. The sequence is that of Cytochrome c oxidase subunit 7C, mitochondrial (COX7C) from Bos taurus (Bovine).